The chain runs to 206 residues: Small ribosomal subunit protein uS4 (206 aa).

In terms of domain architecture, S4 RNA-binding spans 96–158 (SRLDNVVYRM…AKGQLRIKGA (63 aa)).

It belongs to the universal ribosomal protein uS4 family. As to quaternary structure, part of the 30S ribosomal subunit. Contacts protein S5. The interaction surface between S4 and S5 is involved in control of translational fidelity.

Functionally, one of the primary rRNA binding proteins, it binds directly to 16S rRNA where it nucleates assembly of the body of the 30S subunit. With S5 and S12 plays an important role in translational accuracy. The chain is Small ribosomal subunit protein uS4 from Coxiella burnetii (strain CbuG_Q212) (Coxiella burnetii (strain Q212)).